We begin with the raw amino-acid sequence, 81 residues long: MSRSRASGRPRSRRRECEFTKLGIVPDYKDVKRLQKYLTAQGKILPRRRTGVSAKMQRRLAVAIKRARHLALLPVAPSHTR.

It belongs to the bacterial ribosomal protein bS18 family. In terms of assembly, part of the 30S ribosomal subunit. Forms a tight heterodimer with protein bS6.

In terms of biological role, binds as a heterodimer with protein bS6 to the central domain of the 16S rRNA, where it helps stabilize the platform of the 30S subunit. This Chloroflexus aurantiacus (strain ATCC 29366 / DSM 635 / J-10-fl) protein is Small ribosomal subunit protein bS18.